Reading from the N-terminus, the 131-residue chain is Holo-[acyl-carrier-protein] synthase (131 aa).

Mg(2+) is bound by residues Asp8 and Glu63.

Belongs to the P-Pant transferase superfamily. AcpS family. Requires Mg(2+) as cofactor.

The protein localises to the cytoplasm. The catalysed reaction is apo-[ACP] + CoA = holo-[ACP] + adenosine 3',5'-bisphosphate + H(+). In terms of biological role, transfers the 4'-phosphopantetheine moiety from coenzyme A to a Ser of acyl-carrier-protein. This Shewanella pealeana (strain ATCC 700345 / ANG-SQ1) protein is Holo-[acyl-carrier-protein] synthase.